Reading from the N-terminus, the 841-residue chain is Probable outer membrane usher protein EcpC (841 aa).

The N-terminal stretch at 1–29 (MPLRRFSPGLKAQFAFGMVFLFVQPDASA) is a signal peptide.

This sequence belongs to the EcpC/MatD family.

Functionally, part of the ecpRABCDE operon, which encodes the E.coli common pilus (ECP). ECP is found in both commensal and pathogenic strains and plays a dual role in early-stage biofilm development and host cell recognition. This Escherichia coli O18:K1:H7 (strain IHE3034 / ExPEC) protein is Probable outer membrane usher protein EcpC (ecpC).